Here is a 548-residue protein sequence, read N- to C-terminus: ComP-specific O-oligosaccharyltransferase (548 aa).

The next 12 membrane-spanning stretches (helical) occupy residues 8–28, 32–52, 68–88, 91–111, 119–139, 164–184, 189–209, 213–233, 239–259, 331–351, 363–383, and 418–438; these read IKNYTIVSGVFFLGSAFIIPN, LSSTLYKELIAVLGLLILLTV, WFLFVIFIIFIQLIVGEIYFF, FFFSISFLVILFLSFLLGFNE, IVKKIAWIFIIVVQISFLIAI, LGQPNQFSTLILITLFLLCYL, SLNNMVFNILSFCLIFANVMT, SAWISVILISLLYLLKFQKKI, IFFNIVFWTLVYCVPLLFNLI, MLWNGFFIGLIISILILCFLI, LFLFFCVVAFFVHCLLEYPFA, and TLFLGCCWLGYVAFWVEVLDI.

The protein belongs to the PglL O-oligosaccharyltransferase family.

It localises to the cell membrane. In terms of biological role, specifically catalyzes the glycosylation of the pilin-like competence factor ComP. This is ComP-specific O-oligosaccharyltransferase from Acinetobacter baylyi (strain ATCC 33305 / BD413 / ADP1).